Here is a 330-residue protein sequence, read N- to C-terminus: DNA-directed RNA polymerase subunit alpha (330 aa).

The tract at residues 1–231 is alpha N-terminal domain (alpha-NTD); that stretch reads MAILAFQKPD…IYHFMLFSDE (231 aa). The alpha C-terminal domain (alpha-CTD) stretch occupies residues 253–330; that stretch reads MRQLLKTKLV…DISKYKLDKE (78 aa).

This sequence belongs to the RNA polymerase alpha chain family. Homodimer. The RNAP catalytic core consists of 2 alpha, 1 beta, 1 beta' and 1 omega subunit. When a sigma factor is associated with the core the holoenzyme is formed, which can initiate transcription.

The enzyme catalyses RNA(n) + a ribonucleoside 5'-triphosphate = RNA(n+1) + diphosphate. In terms of biological role, DNA-dependent RNA polymerase catalyzes the transcription of DNA into RNA using the four ribonucleoside triphosphates as substrates. The protein is DNA-directed RNA polymerase subunit alpha of Phocaeicola vulgatus (strain ATCC 8482 / DSM 1447 / JCM 5826 / CCUG 4940 / NBRC 14291 / NCTC 11154) (Bacteroides vulgatus).